Here is a 432-residue protein sequence, read N- to C-terminus: Glutamyl-tRNA reductase (432 aa).

Substrate contacts are provided by residues 49–52 (TCNR), serine 101, 106–108 (EPQ), and glutamine 112. Residue cysteine 50 is the Nucleophile of the active site. 181-186 (GAGETI) lines the NADP(+) pocket. Residues 408–432 (PEKPGYRHPPVATPIVRTDDANPAP) are disordered.

It belongs to the glutamyl-tRNA reductase family. In terms of assembly, homodimer.

The enzyme catalyses (S)-4-amino-5-oxopentanoate + tRNA(Glu) + NADP(+) = L-glutamyl-tRNA(Glu) + NADPH + H(+). It participates in porphyrin-containing compound metabolism; protoporphyrin-IX biosynthesis; 5-aminolevulinate from L-glutamyl-tRNA(Glu): step 1/2. Functionally, catalyzes the NADPH-dependent reduction of glutamyl-tRNA(Glu) to glutamate 1-semialdehyde (GSA). In Xanthomonas campestris pv. campestris (strain B100), this protein is Glutamyl-tRNA reductase.